The following is a 462-amino-acid chain: tRNA-2-methylthio-N(6)-dimethylallyladenosine synthase (462 aa).

Residues 28–144 (KKLFVKTYGC…LPKMMEAVNA (117 aa)) enclose the MTTase N-terminal domain. [4Fe-4S] cluster is bound by residues cysteine 37, cysteine 73, cysteine 107, cysteine 181, cysteine 185, and cysteine 188. Residues 167–398 (ATRGPTAFLT…QALLTQQQRA (232 aa)) enclose the Radical SAM core domain. The TRAM domain maps to 401–462 (DAMVGRRVKV…KTNSLTGRLV (62 aa)).

The protein belongs to the methylthiotransferase family. MiaB subfamily. Monomer. [4Fe-4S] cluster serves as cofactor.

The protein localises to the cytoplasm. The enzyme catalyses N(6)-dimethylallyladenosine(37) in tRNA + (sulfur carrier)-SH + AH2 + 2 S-adenosyl-L-methionine = 2-methylsulfanyl-N(6)-dimethylallyladenosine(37) in tRNA + (sulfur carrier)-H + 5'-deoxyadenosine + L-methionine + A + S-adenosyl-L-homocysteine + 2 H(+). Functionally, catalyzes the methylthiolation of N6-(dimethylallyl)adenosine (i(6)A), leading to the formation of 2-methylthio-N6-(dimethylallyl)adenosine (ms(2)i(6)A) at position 37 in tRNAs that read codons beginning with uridine. The protein is tRNA-2-methylthio-N(6)-dimethylallyladenosine synthase of Jannaschia sp. (strain CCS1).